Consider the following 320-residue polypeptide: Putative sporulation hydrolase CotR (320 aa).

The region spanning 7 to 182 (MTFDGGGTLG…VATNPSTASI (176 aa)) is the PNPLA domain. Positions 11 to 16 (GGGTLG) match the GXGXXG motif. Residues 42-46 (GNSIG) carry the GXSXG motif. The Nucleophile role is filled by Ser44. Catalysis depends on Asp169, which acts as the Proton acceptor.

It is found in the spore coat. This chain is Putative sporulation hydrolase CotR (cotR), found in Bacillus subtilis (strain 168).